A 632-amino-acid polypeptide reads, in one-letter code: tRNA uridine 5-carboxymethylaminomethyl modification enzyme MnmG (632 aa).

FAD is bound by residues 13–18 (GGGHAG), V125, and S180. Residue 273–287 (GPRYCPSIEDKVMRF) participates in NAD(+) binding. FAD is bound at residue Q370.

It belongs to the MnmG family. Homodimer. Heterotetramer of two MnmE and two MnmG subunits. FAD is required as a cofactor.

The protein localises to the cytoplasm. In terms of biological role, NAD-binding protein involved in the addition of a carboxymethylaminomethyl (cmnm) group at the wobble position (U34) of certain tRNAs, forming tRNA-cmnm(5)s(2)U34. The chain is tRNA uridine 5-carboxymethylaminomethyl modification enzyme MnmG from Vibrio vulnificus (strain CMCP6).